The sequence spans 301 residues: MKLSGVFTALATPFRDDLSLDERALASFVDWQISSGISGIVPCGTTGESATLNFEEYCTVVRLCIETARGRILVIAGAGSHCTTETISRALFVQSAGADAALIVVPYYNRPSDEGVYQHFRAVHDATNIPIVLYNVPQRTAIDISNDTIRRIAELPRVVGIKDCTGAERVAALKAILPEKVAILSGEDETALASYMNGGSGCISVVSNVAPKMAVELYRLHALGKINMAKQVSGNLAALSRVLFIEPSPSPTKYALSLMGKMRPKVRLPLVELTSSGQTAVKNVLETLDLLRQQKAMHSQL.

Thr46 provides a ligand contact to pyruvate. Tyr134 functions as the Proton donor/acceptor in the catalytic mechanism. Lys162 serves as the catalytic Schiff-base intermediate with substrate. Residue Ile203 coordinates pyruvate.

Belongs to the DapA family. As to quaternary structure, homotetramer; dimer of dimers.

It localises to the cytoplasm. It catalyses the reaction L-aspartate 4-semialdehyde + pyruvate = (2S,4S)-4-hydroxy-2,3,4,5-tetrahydrodipicolinate + H2O + H(+). It participates in amino-acid biosynthesis; L-lysine biosynthesis via DAP pathway; (S)-tetrahydrodipicolinate from L-aspartate: step 3/4. In terms of biological role, catalyzes the condensation of (S)-aspartate-beta-semialdehyde [(S)-ASA] and pyruvate to 4-hydroxy-tetrahydrodipicolinate (HTPA). The protein is 4-hydroxy-tetrahydrodipicolinate synthase of Anaplasma marginale (strain Florida).